The sequence spans 590 residues: Leukocyte immunoglobulin-like receptor subfamily B member 5 (590 aa).

Residues 1–23 form the signal peptide; the sequence is MTLTLSVLICLGLSVGPRTCVQA. The Extracellular portion of the chain corresponds to 24-458; sequence GTLPKPTLWA…PQSGLGRHLG (435 aa). Ig-like C2-type domains are found at residues 27–116, 111–228, 224–313, and 337–418; these read PKPT…LELV, DPLE…SLLI, PSLL…DPLD, and GENV…LVVS. A disulfide bridge links Cys49 with Cys98. N-linked (GlcNAc...) asparagine glycosylation is present at Asn139. 2 disulfide bridges follow: Cys144-Cys195 and Cys244-Cys295. N-linked (GlcNAc...) asparagine glycans are attached at residues Asn279 and Asn339. Residues Cys344 and Cys395 are joined by a disulfide bond. Positions 416–433 are enriched in low complexity; sequence VVSGPSGDPSLSPTGSTP. A disordered region spans residues 416 to 449; sequence VVSGPSGDPSLSPTGSTPTPGPEDQPLTPTGLDP. Residues 459–479 form a helical membrane-spanning segment; that stretch reads VVTGVSVAFVLLLFLLLFLLL. Over 480–590 the chain is Cytoplasmic; it reads RHRHQSKHRT…PSIYAPLAIH (111 aa). 2 disordered regions span residues 488–514 and 529–550; these read RTSAHFYRPAGAAGPEPKDQGLQKRAS and KDTQPKDGVEMDAPAAASEAPQ. Ser514 bears the Phosphoserine mark. An ITIM motif 1 motif is present at residues 552–557; it reads VTYAQL. The span at 562–578 shows a compositional bias: basic and acidic residues; the sequence is LRREATEPPPSQEREPP. A disordered region spans residues 562–590; it reads LRREATEPPPSQEREPPAEPSIYAPLAIH. The short motif at 582 to 587 is the ITIM motif 2 element; the sequence is SIYAPL.

As to expression, detected in a natural killer (NK) cells.

The protein localises to the membrane. Functionally, may act as receptor for class I MHC antigens. The polypeptide is Leukocyte immunoglobulin-like receptor subfamily B member 5 (LILRB5) (Homo sapiens (Human)).